We begin with the raw amino-acid sequence, 984 residues long: MALDYLLLLLLASAVAAMEETLMDTRTATAELGWTANPASGWEEVSGYDENLNTIRTYQVCNVFEPNQNNWLLTTFINRRGAHRIYTEMRFTVRDCSSLPNVPGSCKETFNLYYYETDSVIATKKSAFWSEAPYLKVDTIAADESFSQVDFGGRLMKVNTEVRSFGPLTRNGFYLAFQDYGACMSLLSVRVFFKKCPSIVQNFAVFPETMTGAESTSLVIARGTCIPNAEEVDVPIKLYCNGDGEWMVPIGRCTCKPGYEPENSVACKACPAGTFKASQEAEGCSHCPSNSRSPAEASPICTCRTGYYRADFDPPEVACTSVPSGPRNVISIVNETSIILEWHPPRETGGRDDVTYNIICKKCRADRRSCSRCDDNVEFVPRQLGLTECRVSISSLWAHTPYTFDIQAINGVSSKSPFPPQHVSVNITTNQAAPSTVPIMHQVSATMRSITLSWPQPEQPNGIILDYEIRYYEKEHNEFNSSMARSQTNTARIDGLRPGMVYVVQVRARTVAGYGKFSGKMCFQTLTDDDYKSELREQLPLIAGSAAAGVVFVVSLVAISIVCSRKRAYSKEAVYSDKLQHYSTGRGSPGMKIYIDPFTYEDPNEAVREFAKEIDVSFVKIEEVIGAGEFGEVYKGRLKLPGKREIYVAIKTLKAGYSEKQRRDFLSEASIMGQFDHPNIIRLEGVVTKSRPVMIITEFMENGALDSFLRQNDGQFTVIQLVGMLRGIAAGMKYLAEMNYVHRDLAARNILVNSNLVCKVSDFGLSRYLQDDTSDPTYTSSLGGKIPVRWTAPEAIAYRKFTSASDVWSYGIVMWEVMSFGERPYWDMSNQDVINAIEQDYRLPPPMDCPAALHQLMLDCWQKDRNSRPRFAEIVNTLDKMIRNPASLKTVATITAVPSQPLLDRSIPDFTAFTTVDDWLSAIKMVQYRDSFLTAGFTSLQLVTQMTSEDLLRIGITLAGHQKKILNSIHSMRVQISQSPTAMA.

The N-terminal stretch at 1–17 is a signal peptide; sequence MALDYLLLLLLASAVAA. The Extracellular segment spans residues 18–540; the sequence is MEETLMDTRT…YKSELREQLP (523 aa). Positions 19–201 constitute an Eph LBD domain; sequence EETLMDTRTA…FFKKCPSIVQ (183 aa). 2 consecutive Fibronectin type-III domains span residues 322–432 and 433–528; these read VPSG…TNQA and APST…TLTD. 3 N-linked (GlcNAc...) asparagine glycosylation sites follow: Asn334, Asn426, and Asn480. Residues 541–563 form a helical membrane-spanning segment; sequence LIAGSAAAGVVFVVSLVAISIVC. At 564–984 the chain is on the cytoplasmic side; it reads SRKRAYSKEA…QISQSPTAMA (421 aa). Tyr600 carries the post-translational modification Phosphotyrosine. Residues 619–882 enclose the Protein kinase domain; that stretch reads VKIEEVIGAG…EIVNTLDKMI (264 aa). ATP contacts are provided by residues 625 to 633 and Lys651; that span reads IGAGEFGEV. Asp744 serves as the catalytic Proton acceptor. The region spanning 911 to 975 is the SAM domain; that stretch reads TAFTTVDDWL…LNSIHSMRVQ (65 aa). The residue at position 928 (Tyr928) is a Phosphotyrosine; by autocatalysis. Positions 982–984 match the PDZ-binding motif; sequence AMA.

The protein belongs to the protein kinase superfamily. Tyr protein kinase family. Ephrin receptor subfamily. As to quaternary structure, heterotetramer upon binding of the ligand. The heterotetramer is composed of an ephrin dimer and a receptor dimer. Oligomerization is probably required to induce biological responses. Interacts with EPHB6; transphosphorylates EPHB6 to form an active signaling complex. Interacts with PICK1. Interacts (through Tyr-594) with NCK1 (via SH2 domain); activates the JUN cascade to regulate cell adhesion. The ligand-activated form interacts (through Tyr-928) with GRB7 and GRB10 (via SH2 domains). The ligand-activated form interacts (residues within the catalytic domain) with GRB2 (via SH2 domain). Interacts with GRB2, SHC1 and SRC; activates the MAPK/ERK cascade to regulate cell migration. Interacts with CBL; regulates receptor degradation through ubiquitination. Interacts with ACP1. Post-translationally, phosphorylated. Autophosphorylation is stimulated by the ligand EFNB1. Required for interaction with SH2 domain-containing interactors, for activation of the MAPK/ERK and JUN signaling cascades and for ubiquitination by CBL. In terms of processing, ubiquitinated; (EFNB1)ligand-induced poly- and/or multi-ubiquitination by CBL is regulated by SRC and leads to lysosomal degradation. Preferentially expressed in brain.

Its subcellular location is the cell membrane. It is found in the early endosome membrane. The protein resides in the cell projection. The protein localises to the dendrite. The enzyme catalyses L-tyrosyl-[protein] + ATP = O-phospho-L-tyrosyl-[protein] + ADP + H(+). Functionally, receptor tyrosine kinase which binds promiscuously transmembrane ephrin-B family ligands residing on adjacent cells, leading to contact-dependent bidirectional signaling into neighboring cells. The signaling pathway downstream of the receptor is referred to as forward signaling while the signaling pathway downstream of the ephrin ligand is referred to as reverse signaling. Cognate/functional ephrin ligands for this receptor include EFNB1, EFNB2 and EFNB3. During nervous system development, regulates retinal axon guidance redirecting ipsilaterally ventrotemporal retinal ganglion cells axons at the optic chiasm midline. This probably requires repulsive interaction with EFNB2. In the adult nervous system together with EFNB3, regulates chemotaxis, proliferation and polarity of the hippocampus neural progenitors. In addition to its role in axon guidance also plays an important redundant role with other ephrin-B receptors in development and maturation of dendritic spines and synapse formation. May also regulate angiogenesis. More generally, may play a role in targeted cell migration and adhesion. Upon activation by EFNB1 and probably other ephrin-B ligands activates the MAPK/ERK and the JNK signaling cascades to regulate cell migration and adhesion respectively. Involved in the maintenance of the pool of satellite cells (muscle stem cells) by promoting their self-renewal and reducing their activation and differentiation. This Homo sapiens (Human) protein is Ephrin type-B receptor 1 (EPHB1).